We begin with the raw amino-acid sequence, 311 residues long: GTP cyclohydrolase MptA (311 aa).

This sequence belongs to the GTP cyclohydrolase IV family. Homodimer. The cofactor is Fe(2+).

It carries out the reaction GTP + H2O = 7,8-dihydroneopterin 2',3'-cyclic phosphate + formate + diphosphate + H(+). Its pathway is cofactor biosynthesis; 5,6,7,8-tetrahydromethanopterin biosynthesis. Functionally, converts GTP to 7,8-dihydro-D-neopterin 2',3'-cyclic phosphate, the first intermediate in the biosynthesis of coenzyme methanopterin. This Methanobrevibacter smithii (strain ATCC 35061 / DSM 861 / OCM 144 / PS) protein is GTP cyclohydrolase MptA.